Reading from the N-terminus, the 350-residue chain is Uroporphyrinogen decarboxylase (350 aa).

Residues 23–27, Asp73, Tyr150, Thr205, and His322 each bind substrate; that span reads RQAGR.

Belongs to the uroporphyrinogen decarboxylase family. As to quaternary structure, homodimer.

The protein localises to the cytoplasm. It catalyses the reaction uroporphyrinogen III + 4 H(+) = coproporphyrinogen III + 4 CO2. The protein operates within porphyrin-containing compound metabolism; protoporphyrin-IX biosynthesis; coproporphyrinogen-III from 5-aminolevulinate: step 4/4. Functionally, catalyzes the decarboxylation of four acetate groups of uroporphyrinogen-III to yield coproporphyrinogen-III. This Methylococcus capsulatus (strain ATCC 33009 / NCIMB 11132 / Bath) protein is Uroporphyrinogen decarboxylase.